Here is a 255-residue protein sequence, read N- to C-terminus: tRNA-cytidine(32) 2-sulfurtransferase (255 aa).

The PP-loop motif motif lies at 37-42 (SGGKDS). Residues Cys-112, Cys-115, and Cys-202 each coordinate [4Fe-4S] cluster.

It belongs to the TtcA family. Homodimer. Mg(2+) serves as cofactor. Requires [4Fe-4S] cluster as cofactor.

Its subcellular location is the cytoplasm. The enzyme catalyses cytidine(32) in tRNA + S-sulfanyl-L-cysteinyl-[cysteine desulfurase] + AH2 + ATP = 2-thiocytidine(32) in tRNA + L-cysteinyl-[cysteine desulfurase] + A + AMP + diphosphate + H(+). The protein operates within tRNA modification. Functionally, catalyzes the ATP-dependent 2-thiolation of cytidine in position 32 of tRNA, to form 2-thiocytidine (s(2)C32). The sulfur atoms are provided by the cysteine/cysteine desulfurase (IscS) system. The sequence is that of tRNA-cytidine(32) 2-sulfurtransferase from Citrifermentans bemidjiense (strain ATCC BAA-1014 / DSM 16622 / JCM 12645 / Bem) (Geobacter bemidjiensis).